The sequence spans 118 residues: Large ribosomal subunit protein bL20c (118 aa).

Belongs to the bacterial ribosomal protein bL20 family.

The protein resides in the plastid. Its subcellular location is the chloroplast. Its function is as follows. Binds directly to 23S ribosomal RNA and is necessary for the in vitro assembly process of the 50S ribosomal subunit. It is not involved in the protein synthesizing functions of that subunit. The polypeptide is Large ribosomal subunit protein bL20c (Adiantum capillus-veneris (Maidenhair fern)).